We begin with the raw amino-acid sequence, 405 residues long: Acetate kinase (405 aa).

Position 7 (Asn-7) interacts with Mg(2+). Lys-14 contributes to the ATP binding site. Substrate is bound at residue Arg-92. Residue Asp-149 is the Proton donor/acceptor of the active site. Residues 209–213 (HLGNG) and 284–286 (DMR) contribute to the ATP site. Glu-389 is a Mg(2+) binding site.

This sequence belongs to the acetokinase family. In terms of assembly, homodimer. The cofactor is Mg(2+). Requires Mn(2+) as cofactor.

Its subcellular location is the cytoplasm. It catalyses the reaction acetate + ATP = acetyl phosphate + ADP. It participates in metabolic intermediate biosynthesis; acetyl-CoA biosynthesis; acetyl-CoA from acetate: step 1/2. Its function is as follows. Catalyzes the formation of acetyl phosphate from acetate and ATP. Can also catalyze the reverse reaction. This Borrelia garinii subsp. bavariensis (strain ATCC BAA-2496 / DSM 23469 / PBi) (Borreliella bavariensis) protein is Acetate kinase.